We begin with the raw amino-acid sequence, 838 residues long: Translation initiation factor IF-2 (838 aa).

Positions 1 to 235 (MSDTDGKKPL…RSLAAMKREQ (235 aa)) are disordered. The span at 18–27 (SGQVKQSFSH) shows a compositional bias: polar residues. The segment covering 50 to 60 (SGSSTTTSSPS) has biased composition (low complexity). Positions 88–156 (KLREVDDAKR…AARRAEEAKR (69 aa)) are enriched in basic and acidic residues. Low complexity predominate over residues 162–177 (PAAAQPDAADSRASAP). Residues 187–208 (SRKEREREADRDRTTKKDDSRR) show a composition bias toward basic and acidic residues. A tr-type G domain is found at 335–509 (PRPPIITIMG…ELLDLRANPK (175 aa)). The tract at residues 344–351 (GHVDHGKT) is G1. Residue 344 to 351 (GHVDHGKT) coordinates GTP. The interval 369–373 (GITQH) is G2. Positions 391 to 394 (DTPG) are G3. GTP contacts are provided by residues 391-395 (DTPGH) and 445-448 (NKID). The G4 stretch occupies residues 445–448 (NKID). Positions 481–483 (SAK) are G5.

The protein belongs to the TRAFAC class translation factor GTPase superfamily. Classic translation factor GTPase family. IF-2 subfamily.

The protein resides in the cytoplasm. Its function is as follows. One of the essential components for the initiation of protein synthesis. Protects formylmethionyl-tRNA from spontaneous hydrolysis and promotes its binding to the 30S ribosomal subunits. Also involved in the hydrolysis of GTP during the formation of the 70S ribosomal complex. The protein is Translation initiation factor IF-2 of Cereibacter sphaeroides (strain ATCC 17025 / ATH 2.4.3) (Rhodobacter sphaeroides).